A 374-amino-acid polypeptide reads, in one-letter code: N5-carboxyaminoimidazole ribonucleotide synthase (374 aa).

Residues Arg-108, Lys-148, 153–159 (GYDGKGQ), 183–186 (EQFL), Glu-191, His-214, and 266–267 (NE) each bind ATP. One can recognise an ATP-grasp domain in the interval 112–296 (KQTLQKAGSK…QFDTHILAVT (185 aa)).

It belongs to the PurK/PurT family. In terms of assembly, homodimer.

The enzyme catalyses 5-amino-1-(5-phospho-beta-D-ribosyl)imidazole + hydrogencarbonate + ATP = 5-carboxyamino-1-(5-phospho-D-ribosyl)imidazole + ADP + phosphate + 2 H(+). It participates in purine metabolism; IMP biosynthesis via de novo pathway; 5-amino-1-(5-phospho-D-ribosyl)imidazole-4-carboxylate from 5-amino-1-(5-phospho-D-ribosyl)imidazole (N5-CAIR route): step 1/2. In terms of biological role, catalyzes the ATP-dependent conversion of 5-aminoimidazole ribonucleotide (AIR) and HCO(3)(-) to N5-carboxyaminoimidazole ribonucleotide (N5-CAIR). The sequence is that of N5-carboxyaminoimidazole ribonucleotide synthase from Staphylococcus haemolyticus (strain JCSC1435).